Consider the following 770-residue polypeptide: uncharacterized protein (770 aa).

A signal peptide spans 1-24 (MVSAAWLRYPSLLTLGILVSRVAA). 4 N-linked (GlcNAc...) asparagine glycosylation sites follow: Asn-78, Asn-204, Asn-533, and Asn-638. The tract at residues 746 to 770 (SWGTGQNDVPPSLGAGIKRDGLRFT) is disordered.

Belongs to the glycosyl hydrolase 92 family.

The protein resides in the secreted. This is an uncharacterized protein from Arthroderma benhamiae (strain ATCC MYA-4681 / CBS 112371) (Trichophyton mentagrophytes).